We begin with the raw amino-acid sequence, 423 residues long: Lysosomal acid phosphatase (423 aa).

The signal sequence occupies residues 1–30 (MAGKRSGWSRAALLQLLLGVNLVVMPPTQA). The Lumenal segment spans residues 31 to 380 (RSLRFVTLLY…QVASGPADTE (350 aa)). The Nucleophile role is filled by histidine 42. Residues asparagine 92, asparagine 133, asparagine 167, asparagine 177, asparagine 191, and asparagine 267 are each glycosylated (N-linked (GlcNAc...) asparagine). Intrachain disulfides connect cysteine 159–cysteine 370, cysteine 212–cysteine 310, and cysteine 345–cysteine 349. Aspartate 287 (proton donor) is an active-site residue. 2 N-linked (GlcNAc...) asparagine glycosylation sites follow: asparagine 322 and asparagine 331. Residues 381 to 401 (VIVALAVCGSILFLLIVLLLT) traverse the membrane as a helical segment. The Cytoplasmic segment spans residues 402–423 (VLFRMQAQPPGYRHVADGEDHA).

It belongs to the histidine acid phosphatase family. In terms of processing, the membrane-bound form is converted to the soluble form by sequential proteolytic processing. First, the C-terminal cytoplasmic tail is removed. Cleavage by a lysosomal protease releases the soluble form in the lysosome lumen.

The protein resides in the lysosome membrane. Its subcellular location is the lysosome lumen. The enzyme catalyses a phosphate monoester + H2O = an alcohol + phosphate. In Pongo abelii (Sumatran orangutan), this protein is Lysosomal acid phosphatase (ACP2).